The primary structure comprises 208 residues: Small ribosomal subunit protein uS4 (208 aa).

The region spanning 98 to 161 (RRLDNVIYRL…RKIPVLAEAQ (64 aa)) is the S4 RNA-binding domain.

This sequence belongs to the universal ribosomal protein uS4 family. As to quaternary structure, part of the 30S ribosomal subunit. Contacts protein S5. The interaction surface between S4 and S5 is involved in control of translational fidelity.

One of the primary rRNA binding proteins, it binds directly to 16S rRNA where it nucleates assembly of the body of the 30S subunit. Its function is as follows. With S5 and S12 plays an important role in translational accuracy. The chain is Small ribosomal subunit protein uS4 from Nitratidesulfovibrio vulgaris (strain ATCC 29579 / DSM 644 / CCUG 34227 / NCIMB 8303 / VKM B-1760 / Hildenborough) (Desulfovibrio vulgaris).